We begin with the raw amino-acid sequence, 917 residues long: Methionine--tRNA ligase, cytoplasmic (917 aa).

The short motif at 44–54 (PYVNNVPHLGN) is the 'HIGH' region element. The 'KMSKS' region motif lies at 367–371 (KFSKS). An ATP-binding site is contributed by K370. Disordered stretches follow at residues 591–623 (GSQD…GDKK) and 702–749 (SCTP…AAAA). The span at 614-623 (PTKDKKGDKK) shows a compositional bias: basic and acidic residues. Over residues 702 to 713 (SCTPTPTSTPAS) the composition is skewed to low complexity. Residues 732-741 (EPKKAKEQKK) are compositionally biased toward basic and acidic residues. A tRNA-binding domain is found at 756–857 (DVGRLDMRVG…ADSKPGTPVV (102 aa)).

Belongs to the class-I aminoacyl-tRNA synthetase family.

It is found in the cytoplasm. The catalysed reaction is tRNA(Met) + L-methionine + ATP = L-methionyl-tRNA(Met) + AMP + diphosphate. The polypeptide is Methionine--tRNA ligase, cytoplasmic (Caenorhabditis elegans).